Reading from the N-terminus, the 388-residue chain is N5-carboxyaminoimidazole ribonucleotide synthase (388 aa).

ATP-binding positions include K105, K140, 174–177 (ESFV), E182, and 267–268 (NE). Residues 109 to 297 (RHFLQNLGLP…QFALQLQAVT (189 aa)) enclose the ATP-grasp domain.

This sequence belongs to the PurK/PurT family. As to quaternary structure, homodimer.

The enzyme catalyses 5-amino-1-(5-phospho-beta-D-ribosyl)imidazole + hydrogencarbonate + ATP = 5-carboxyamino-1-(5-phospho-D-ribosyl)imidazole + ADP + phosphate + 2 H(+). The protein operates within purine metabolism; IMP biosynthesis via de novo pathway; 5-amino-1-(5-phospho-D-ribosyl)imidazole-4-carboxylate from 5-amino-1-(5-phospho-D-ribosyl)imidazole (N5-CAIR route): step 1/2. Its function is as follows. Catalyzes the ATP-dependent conversion of 5-aminoimidazole ribonucleotide (AIR) and HCO(3)(-) to N5-carboxyaminoimidazole ribonucleotide (N5-CAIR). This chain is N5-carboxyaminoimidazole ribonucleotide synthase, found in Synechocystis sp. (strain ATCC 27184 / PCC 6803 / Kazusa).